The sequence spans 294 residues: Cyclin-G1 (294 aa).

The protein belongs to the cyclin family. Cyclin G subfamily.

The protein localises to the nucleus. May play a role in growth regulation. Is associated with G2/M phase arrest in response to DNA damage. May be an intermediate by which p53 mediates its role as an inhibitor of cellular proliferation. The chain is Cyclin-G1 (Ccng1) from Rattus norvegicus (Rat).